A 263-amino-acid chain; its full sequence is uncharacterized protein (263 aa).

Residues 107-246 (ILGVLNGDGS…CCSFLEKLGI (140 aa)) enclose the DOD-type homing endonuclease domain.

This is an uncharacterized protein from Methanocaldococcus jannaschii (strain ATCC 43067 / DSM 2661 / JAL-1 / JCM 10045 / NBRC 100440) (Methanococcus jannaschii).